The primary structure comprises 430 residues: Enolase (430 aa).

A (2R)-2-phosphoglycerate-binding site is contributed by Gln-163. The active-site Proton donor is Glu-205. Positions 242, 287, and 314 each coordinate Mg(2+). Residues Lys-339, Arg-368, Ser-369, and Lys-390 each contribute to the (2R)-2-phosphoglycerate site. Catalysis depends on Lys-339, which acts as the Proton acceptor.

The protein belongs to the enolase family. Mg(2+) serves as cofactor.

Its subcellular location is the cytoplasm. It localises to the secreted. It is found in the cell surface. The enzyme catalyses (2R)-2-phosphoglycerate = phosphoenolpyruvate + H2O. Its pathway is carbohydrate degradation; glycolysis; pyruvate from D-glyceraldehyde 3-phosphate: step 4/5. Functionally, catalyzes the reversible conversion of 2-phosphoglycerate (2-PG) into phosphoenolpyruvate (PEP). It is essential for the degradation of carbohydrates via glycolysis. This is Enolase from Listeria innocua serovar 6a (strain ATCC BAA-680 / CLIP 11262).